A 238-amino-acid polypeptide reads, in one-letter code: Ribosomal RNA small subunit methyltransferase G (238 aa).

Residues G77, F82, 128–129 (AE), and R147 contribute to the S-adenosyl-L-methionine site.

The protein belongs to the methyltransferase superfamily. RNA methyltransferase RsmG family.

The protein localises to the cytoplasm. In terms of biological role, specifically methylates the N7 position of guanine in position 535 of 16S rRNA. This is Ribosomal RNA small subunit methyltransferase G from Geobacillus sp. (strain WCH70).